A 20-amino-acid chain; its full sequence is Serum amyloid P-component (20 aa).

Residues 1–20 (ZPIDLMGKVFVFDKELSPBI) enclose the Pentraxin (PTX) domain.

This sequence belongs to the pentraxin family. As to quaternary structure, homopentamer. Pentraxin (or pentaxin) have a discoid arrangement of 5 non-covalently bound subunits.

Its subcellular location is the secreted. This is Serum amyloid P-component from Pleuronectes platessa (European plaice).